Reading from the N-terminus, the 189-residue chain is Apolipoprotein D (189 aa).

The signal sequence occupies residues 1–20 (MGMMLLLLSMLAGLVAEAEG). Residue Gln21 is modified to Pyrrolidone carboxylic acid. 2 disulfides stabilise this stretch: Cys28–Cys134 and Cys61–Cys185. Residues Asn65 and Asn98 are each glycosylated (N-linked (GlcNAc...) asparagine).

It belongs to the calycin superfamily. Lipocalin family. As to quaternary structure, homodimer.

It localises to the secreted. APOD occurs in the macromolecular complex with lecithin-transport and binding of bilin. Appears to be able to transport a variety of ligands in a number of different contexts. This is Apolipoprotein D (APOD) from Cavia porcellus (Guinea pig).